The chain runs to 167 residues: Crossover junction endodeoxyribonuclease RuvC (167 aa).

Catalysis depends on residues aspartate 11, glutamate 71, and aspartate 143. Residues aspartate 11, glutamate 71, and aspartate 143 each contribute to the Mg(2+) site.

Belongs to the RuvC family. As to quaternary structure, homodimer which binds Holliday junction (HJ) DNA. The HJ becomes 2-fold symmetrical on binding to RuvC with unstacked arms; it has a different conformation from HJ DNA in complex with RuvA. In the full resolvosome a probable DNA-RuvA(4)-RuvB(12)-RuvC(2) complex forms which resolves the HJ. Mg(2+) serves as cofactor.

It is found in the cytoplasm. The enzyme catalyses Endonucleolytic cleavage at a junction such as a reciprocal single-stranded crossover between two homologous DNA duplexes (Holliday junction).. In terms of biological role, the RuvA-RuvB-RuvC complex processes Holliday junction (HJ) DNA during genetic recombination and DNA repair. Endonuclease that resolves HJ intermediates. Cleaves cruciform DNA by making single-stranded nicks across the HJ at symmetrical positions within the homologous arms, yielding a 5'-phosphate and a 3'-hydroxyl group; requires a central core of homology in the junction. The consensus cleavage sequence is 5'-(A/T)TT(C/G)-3'. Cleavage occurs on the 3'-side of the TT dinucleotide at the point of strand exchange. HJ branch migration catalyzed by RuvA-RuvB allows RuvC to scan DNA until it finds its consensus sequence, where it cleaves and resolves the cruciform DNA. This is Crossover junction endodeoxyribonuclease RuvC from Acidiphilium cryptum (strain JF-5).